We begin with the raw amino-acid sequence, 493 residues long: Malonyl-CoA decarboxylase, mitochondrial (493 aa).

The N-terminal 39 residues, 1–39 (MRGFGPGLTARRLLPLRLPPRPPGPRLASGQAAGALERA), are a transit peptide targeting the mitochondrion. The interval 40–190 (MDELLRRAVP…VLKGMLSEWF (151 aa)) is alpha-helical domain. Lys-59 carries the N6-acetyllysine modification. At Lys-168 the chain carries N6-acetyllysine; alternate. Lys-168 carries the N6-succinyllysine; alternate modification. Residues 191-493 (SSGFLNLERV…VAQFQKNSKL (303 aa)) are catalytic domain. N6-acetyllysine is present on Lys-211. Lys-222 carries the N6-succinyllysine modification. Malonyl-CoA-binding positions include 299 to 305 (QGVELGT) and Ser-329. The Proton acceptor role is filled by Ser-329. N6-acetyllysine is present on Lys-389. Residue His-423 participates in malonyl-CoA binding. His-423 serves as the catalytic Proton donor. Residue Lys-472 is modified to N6-acetyllysine. Residues 491 to 493 (SKL) carry the Microbody targeting signal motif.

As to quaternary structure, homotetramer. Dimer of dimers. The two subunits within a dimer display conformational differences suggesting that at any given moment, only one of the two subunits is competent for malonyl-CoA binding and catalytic activity. Under oxidizing conditions, can form disulfide-linked homotetramers (in vitro). Associates with the peroxisomal targeting signal receptor PEX5. Acetylation at Lys-472 activates malonyl-CoA decarboxylase activity. Deacetylation at Lys-472 by SIRT4 represses activity, leading to promote lipogenesis. In terms of processing, interchain disulfide bonds may form in peroxisomes (Potential). Interchain disulfide bonds are not expected to form in the reducing environment of the cytoplasm and mitochondria. In terms of tissue distribution, expressed in fibroblasts and hepatoblastoma cells (at protein level). Expressed strongly in heart, liver, skeletal muscle, kidney and pancreas. Expressed in myotubes. Expressed weakly in brain, placenta, spleen, thymus, testis, ovary and small intestine.

Its subcellular location is the cytoplasm. The protein localises to the mitochondrion matrix. It localises to the peroxisome. The protein resides in the peroxisome matrix. It carries out the reaction malonyl-CoA + H(+) = acetyl-CoA + CO2. It functions in the pathway metabolic intermediate biosynthesis; acetyl-CoA biosynthesis; acetyl-CoA from malonyl-CoA: step 1/1. Its activity is regulated as follows. Malonyl-CoA decarboxylase activity does not require any cofactors or divalent metal ions. Formation of interchain disulfide bonds leads to positive cooperativity between active sites and increases the affinity for malonyl-CoA and the catalytic efficiency (in vitro). Catalyzes the conversion of malonyl-CoA to acetyl-CoA. In the fatty acid biosynthesis MCD selectively removes malonyl-CoA and thus assures that methyl-malonyl-CoA is the only chain elongating substrate for fatty acid synthase and that fatty acids with multiple methyl side chains are produced. In peroxisomes it may be involved in degrading intraperoxisomal malonyl-CoA, which is generated by the peroxisomal beta-oxidation of odd chain-length dicarboxylic fatty acids. Plays a role in the metabolic balance between glucose and lipid oxidation in muscle independent of alterations in insulin signaling. May play a role in controlling the extent of ischemic injury by promoting glucose oxidation. The chain is Malonyl-CoA decarboxylase, mitochondrial from Homo sapiens (Human).